Consider the following 506-residue polypeptide: Maturase K (506 aa).

This sequence belongs to the intron maturase 2 family. MatK subfamily.

Its subcellular location is the plastid. It localises to the chloroplast. Functionally, usually encoded in the trnK tRNA gene intron. Probably assists in splicing its own and other chloroplast group II introns. This Olea europaea (Common olive) protein is Maturase K.